A 365-amino-acid polypeptide reads, in one-letter code: uncharacterized protein (365 aa).

It belongs to the NAD(P)-dependent epimerase/dehydratase family.

It is found in the cytoplasm. The protein localises to the nucleus. This is an uncharacterized protein from Schizosaccharomyces pombe (strain 972 / ATCC 24843) (Fission yeast).